We begin with the raw amino-acid sequence, 517 residues long: Ribonuclease Y (517 aa).

Residues 1–21 (MIESLIALIAAIVGLGIGYLV) form a helical membrane-spanning segment. Positions 207 to 273 (LINVINIKND…TKVIELLVED (67 aa)) constitute a KH domain. The HD domain maps to 333-426 (ALAHSLEVAH…VCAADTLSAA (94 aa)).

The protein belongs to the RNase Y family.

Its subcellular location is the cell membrane. Functionally, endoribonuclease that initiates mRNA decay. The sequence is that of Ribonuclease Y from Campylobacter jejuni subsp. jejuni serotype O:2 (strain ATCC 700819 / NCTC 11168).